Here is a 190-residue protein sequence, read N- to C-terminus: Elongation factor P (190 aa).

It belongs to the elongation factor P family.

The protein localises to the cytoplasm. It functions in the pathway protein biosynthesis; polypeptide chain elongation. Functionally, involved in peptide bond synthesis. Stimulates efficient translation and peptide-bond synthesis on native or reconstituted 70S ribosomes in vitro. Probably functions indirectly by altering the affinity of the ribosome for aminoacyl-tRNA, thus increasing their reactivity as acceptors for peptidyl transferase. In Pseudomonas fluorescens (strain ATCC BAA-477 / NRRL B-23932 / Pf-5), this protein is Elongation factor P.